The following is a 1274-amino-acid chain: Clustered mitochondria protein homolog (1274 aa).

A disordered region spans residues 1–53 (MAQTNGELEHSKGMSSPAVRISQAQKSTKLTVDPESPEQVANGTHAEGEQPEE). TPR repeat units lie at residues 293–326 (SPSF…PNNP), 510–543 (DYGG…KKHP), and 628–661 (AKEA…ERVD). Residues 342–586 (DITRSQENYL…RVTPLDVMWQ (245 aa)) enclose the Clu domain. 2 disordered regions span residues 631–655 (AAKK…EEAL) and 893–925 (VSNG…ARAA). TPR repeat units follow at residues 998–1031 (AKLY…TERT), 1040–1073 (ILSY…WKII), 1082–1115 (ITTM…CESL), and 1124–1157 (ATIL…FLQQ). Residues 1197 to 1274 (INMTPRTLGT…KLRGSKKSSA (78 aa)) form a disordered region. Residues 1200 to 1217 (TPRTLGTRVQPQVGQTAP) are compositionally biased toward polar residues.

The protein belongs to the CLU family. May associate with the eukaryotic translation initiation factor 3 (eIF-3) complex.

Its subcellular location is the cytoplasm. In terms of biological role, mRNA-binding protein involved in proper cytoplasmic distribution of mitochondria. This is Clustered mitochondria protein homolog from Aspergillus terreus (strain NIH 2624 / FGSC A1156).